Here is a 522-residue protein sequence, read N- to C-terminus: Ribose import ATP-binding protein RbsA 1 (522 aa).

2 consecutive ABC transporter domains span residues 8–243 and 249–496; these read LRIE…GRSI and RERP…VSTN. 40-47 contacts ATP; that stretch reads GENGAGKS. The disordered stretch occupies residues 492–522; that stretch reads AVSTNQYKPDKSDKPDASAGKTDQKEAPRGH. Over residues 499–522 the composition is skewed to basic and acidic residues; sequence KPDKSDKPDASAGKTDQKEAPRGH.

It belongs to the ABC transporter superfamily. Ribose importer (TC 3.A.1.2.1) family. As to quaternary structure, the complex is composed of an ATP-binding protein (RbsA), two transmembrane proteins (RbsC) and a solute-binding protein (RbsB).

It localises to the cell membrane. It catalyses the reaction D-ribose(out) + ATP + H2O = D-ribose(in) + ADP + phosphate + H(+). Its function is as follows. Part of the ABC transporter complex RbsABC involved in ribose import. Responsible for energy coupling to the transport system. The sequence is that of Ribose import ATP-binding protein RbsA 1 from Streptomyces avermitilis (strain ATCC 31267 / DSM 46492 / JCM 5070 / NBRC 14893 / NCIMB 12804 / NRRL 8165 / MA-4680).